A 196-amino-acid polypeptide reads, in one-letter code: 3-isopropylmalate dehydratase small subunit (196 aa).

This sequence belongs to the LeuD family. LeuD type 1 subfamily. In terms of assembly, heterodimer of LeuC and LeuD.

It catalyses the reaction (2R,3S)-3-isopropylmalate = (2S)-2-isopropylmalate. It functions in the pathway amino-acid biosynthesis; L-leucine biosynthesis; L-leucine from 3-methyl-2-oxobutanoate: step 2/4. Catalyzes the isomerization between 2-isopropylmalate and 3-isopropylmalate, via the formation of 2-isopropylmaleate. The chain is 3-isopropylmalate dehydratase small subunit from Corynebacterium aurimucosum (strain ATCC 700975 / DSM 44827 / CIP 107346 / CN-1) (Corynebacterium nigricans).